The following is a 129-amino-acid chain: Glycine cleavage system H protein (129 aa).

The Lipoyl-binding domain maps to 24 to 106; it reads TYTVGITEHA…YADGWIFKIK (83 aa). K65 carries the N6-lipoyllysine modification.

The protein belongs to the GcvH family. The glycine cleavage system is composed of four proteins: P, T, L and H. (R)-lipoate serves as cofactor.

Functionally, the glycine cleavage system catalyzes the degradation of glycine. The H protein shuttles the methylamine group of glycine from the P protein to the T protein. In Salmonella arizonae (strain ATCC BAA-731 / CDC346-86 / RSK2980), this protein is Glycine cleavage system H protein.